The primary structure comprises 488 residues: Ergochrome gene cluster transcriptional regulator CPUR_05433 (488 aa).

Residues 1-29 form a disordered region; sequence MDHSIGGRNCQSGGTTASAPRSTGSDEFP. A compositionally biased stretch (polar residues) spans 9–25; it reads NCQSGGTTASAPRSTGS. Positions 36–63 form a DNA-binding region, zn(2)-C6 fungal-type; sequence CHACSLSKVRCSKEKPSCSRCAKRGVPC.

It localises to the nucleus. Its function is as follows. Transcription factor; part of the gene cluster responsible for the typical purple-black color of the ergot sclerotia. The ergochrome gene cluster produces several ergot pigments including the yellow ergochrome secalonic acid and its derivatives, as well as the red anthraquinones endocrocin and clavorubin. The protein is Ergochrome gene cluster transcriptional regulator CPUR_05433 of Claviceps purpurea (strain 20.1) (Ergot fungus).